The chain runs to 434 residues: 3-phosphoshikimate 1-carboxyvinyltransferase (434 aa).

3-phosphoshikimate is bound by residues Lys-22, Ser-23, and Arg-27. Position 22 (Lys-22) interacts with phosphoenolpyruvate. Residues Gly-93 and Arg-121 each coordinate phosphoenolpyruvate. Positions 168, 169, 170, 199, 320, and 347 each coordinate 3-phosphoshikimate. Gln-170 is a binding site for phosphoenolpyruvate. Asp-320 acts as the Proton acceptor in catalysis. Phosphoenolpyruvate contacts are provided by Arg-351, Arg-394, and Lys-419.

The protein belongs to the EPSP synthase family. Monomer.

The protein localises to the cytoplasm. It catalyses the reaction 3-phosphoshikimate + phosphoenolpyruvate = 5-O-(1-carboxyvinyl)-3-phosphoshikimate + phosphate. It participates in metabolic intermediate biosynthesis; chorismate biosynthesis; chorismate from D-erythrose 4-phosphate and phosphoenolpyruvate: step 6/7. Catalyzes the transfer of the enolpyruvyl moiety of phosphoenolpyruvate (PEP) to the 5-hydroxyl of shikimate-3-phosphate (S3P) to produce enolpyruvyl shikimate-3-phosphate and inorganic phosphate. The protein is 3-phosphoshikimate 1-carboxyvinyltransferase of Burkholderia ambifaria (strain ATCC BAA-244 / DSM 16087 / CCUG 44356 / LMG 19182 / AMMD) (Burkholderia cepacia (strain AMMD)).